The primary structure comprises 355 residues: Probable GTP 3',8-cyclase (355 aa).

Residues 5–233 (AYGRPLKDLR…GRLHNRRVYR (229 aa)) form the Radical SAM core domain. Residue Arg-14 participates in GTP binding. Positions 21, 25, and 28 each coordinate [4Fe-4S] cluster. GTP is bound at residue Lys-69. Position 73 (Gly-73) interacts with S-adenosyl-L-methionine. Thr-97 provides a ligand contact to GTP. S-adenosyl-L-methionine is bound at residue Ser-121. A GTP-binding site is contributed by Lys-157. [4Fe-4S] cluster contacts are provided by Cys-252 and Cys-255. A GTP-binding site is contributed by 257 to 259 (RVR). Cys-269 serves as a coordination point for [4Fe-4S] cluster.

Belongs to the radical SAM superfamily. MoaA family. It depends on [4Fe-4S] cluster as a cofactor.

The enzyme catalyses GTP + AH2 + S-adenosyl-L-methionine = (8S)-3',8-cyclo-7,8-dihydroguanosine 5'-triphosphate + 5'-deoxyadenosine + L-methionine + A + H(+). It participates in cofactor biosynthesis; molybdopterin biosynthesis. Its function is as follows. Catalyzes the cyclization of GTP to (8S)-3',8-cyclo-7,8-dihydroguanosine 5'-triphosphate. The protein is Probable GTP 3',8-cyclase of Aeropyrum pernix (strain ATCC 700893 / DSM 11879 / JCM 9820 / NBRC 100138 / K1).